Reading from the N-terminus, the 388-residue chain is Chaperone protein DnaJ (388 aa).

Residues 5-70 (DYYEVLGVAR…QKRAAYDRFG (66 aa)) form the J domain. The CR-type zinc finger occupies 141 to 219 (GKTETIRLPT…CGGAGRVTRE (79 aa)). Positions 154, 157, 171, 174, 193, 196, 207, and 210 each coordinate Zn(2+). CXXCXGXG motif repeat units lie at residues 154–161 (CEVCAGSG), 171–178 (CPTCGGYG), 193–200 (CPNCHGRG), and 207–214 (CTACGGAG).

This sequence belongs to the DnaJ family. In terms of assembly, homodimer. Requires Zn(2+) as cofactor.

The protein localises to the cytoplasm. In terms of biological role, participates actively in the response to hyperosmotic and heat shock by preventing the aggregation of stress-denatured proteins and by disaggregating proteins, also in an autonomous, DnaK-independent fashion. Unfolded proteins bind initially to DnaJ; upon interaction with the DnaJ-bound protein, DnaK hydrolyzes its bound ATP, resulting in the formation of a stable complex. GrpE releases ADP from DnaK; ATP binding to DnaK triggers the release of the substrate protein, thus completing the reaction cycle. Several rounds of ATP-dependent interactions between DnaJ, DnaK and GrpE are required for fully efficient folding. Also involved, together with DnaK and GrpE, in the DNA replication of plasmids through activation of initiation proteins. This chain is Chaperone protein DnaJ, found in Methylobacterium nodulans (strain LMG 21967 / CNCM I-2342 / ORS 2060).